Here is a 403-residue protein sequence, read N- to C-terminus: Phosphoglycerate kinase (403 aa).

Residues 21–23 (DFN), Arg-36, 59–62 (HLGR), Arg-118, and Arg-151 each bind substrate. Residues Lys-202, Glu-328, and 354–357 (GGDS) each bind ATP.

This sequence belongs to the phosphoglycerate kinase family. As to quaternary structure, monomer.

It is found in the cytoplasm. The catalysed reaction is (2R)-3-phosphoglycerate + ATP = (2R)-3-phospho-glyceroyl phosphate + ADP. It participates in carbohydrate degradation; glycolysis; pyruvate from D-glyceraldehyde 3-phosphate: step 2/5. The polypeptide is Phosphoglycerate kinase (Akkermansia muciniphila (strain ATCC BAA-835 / DSM 22959 / JCM 33894 / BCRC 81048 / CCUG 64013 / CIP 107961 / Muc)).